The chain runs to 124 residues: Transcription initiation factor IIA subunit 2 (124 aa).

The protein belongs to the TFIIA subunit 2 family. As to quaternary structure, TFIIA is a heterodimer composed of the large TOA1 and the small TOA2 subunits.

It localises to the nucleus. Its function is as follows. TFIIA is a component of the transcription machinery of RNA polymerase II and plays an important role in transcriptional activation. TFIIA in a complex with tbp mediates transcriptional activity. The polypeptide is Transcription initiation factor IIA subunit 2 (TOA2) (Cryptococcus neoformans var. neoformans serotype D (strain JEC21 / ATCC MYA-565) (Filobasidiella neoformans)).